Consider the following 401-residue polypeptide: Riboflavin biosynthesis protein RibBA (401 aa).

Positions 1 to 203 (MTDFQFSKVE…IQQLQEYRRK (203 aa)) are DHBP synthase. Residues 30–31 (RE), Asp35, 142–146 (RNGHT), and Glu166 contribute to the D-ribulose 5-phosphate site. Residue Glu31 participates in Mg(2+) binding. His145 contacts Mg(2+). Residues 204 to 401 (HDSLVKQISV…QIKMGHMFNF (198 aa)) form a GTP cyclohydrolase II region. 254–258 (RIHSE) contributes to the GTP binding site. Positions 259, 270, and 272 each coordinate Zn(2+). Residues Gln275, 297–299 (EGR), and Thr319 contribute to the GTP site. Residue Asp331 is the Proton acceptor; for GTP cyclohydrolase activity of the active site. Arg333 (nucleophile; for GTP cyclohydrolase activity) is an active-site residue. GTP-binding residues include Thr354 and Lys359.

It in the N-terminal section; belongs to the DHBP synthase family. This sequence in the C-terminal section; belongs to the GTP cyclohydrolase II family. Mg(2+) serves as cofactor. It depends on Mn(2+) as a cofactor. Requires Zn(2+) as cofactor.

It carries out the reaction D-ribulose 5-phosphate = (2S)-2-hydroxy-3-oxobutyl phosphate + formate + H(+). The catalysed reaction is GTP + 4 H2O = 2,5-diamino-6-hydroxy-4-(5-phosphoribosylamino)-pyrimidine + formate + 2 phosphate + 3 H(+). Its pathway is cofactor biosynthesis; riboflavin biosynthesis; 2-hydroxy-3-oxobutyl phosphate from D-ribulose 5-phosphate: step 1/1. The protein operates within cofactor biosynthesis; riboflavin biosynthesis; 5-amino-6-(D-ribitylamino)uracil from GTP: step 1/4. Its function is as follows. Catalyzes the conversion of D-ribulose 5-phosphate to formate and 3,4-dihydroxy-2-butanone 4-phosphate. Functionally, catalyzes the conversion of GTP to 2,5-diamino-6-ribosylamino-4(3H)-pyrimidinone 5'-phosphate (DARP), formate and pyrophosphate. The protein is Riboflavin biosynthesis protein RibBA of Actinobacillus pleuropneumoniae serotype 7 (strain AP76).